The chain runs to 1427 residues: MRAFCTVSAPLEVCASSAEQLSPGSRFLALRLLGQQQPKTLYFLVDAKSRVREVYTQTCLHFATQGMLDTELFGLAVLIDGEYMFADPESKLSKYGPKSWRSSHTHGLDANGRPLLELHFRVQFYIESPFMLKDETSRHNYYLQLRHNILQRDLPREQAEQALVFLAGLALQADLGDAPPGTSNSKDDSGEETSASPSNGGRGLSATTTLPKISKRANERMLRLSTYVASTSKRETIPLPPSLPPNGADYYRIEDYLPSGLHTPWARSAMRACHREHLGMATAEAELLYIQQACSLHETINAHTYRMRLAKSEQGSGSAWFVVYAKGIKILGGESTNSSSNPETTTFLWPNITKLSFERKKFEIRSGESRITLYAASDEKNKLLLTLCKDTHQWSMKLAARLKEVSKREEEEAAESQRLHASYACSRSLLLPYKSKNEQRISVISSTSSNTTSGIVSDRVHSEDELEIMINTPPAPLAAPSTESLALAHLLDRPSVSRQTSSVGQMSLKDLEEQLAALSVRPQDASSNGATIVTNSSVQRNSMGTTANDSSTATDSPSSQHNIGSQCSSTCSTVVVTSPVNGAGASSSGAPIPVHSTSSSLELGFSHTAQNSALSETSPDDFLSTSAREETESVSGASGVYTLAHGAPPTETSGVYTMHSSELTGQSSEIAESEKSSHYGMFQPQKLEETHVQHSDSVDGKKKEDFRPRSDSNVSTGSSFRGDGSDPTDNKHSLLSAEELTNLIVGRGTYPSRKTVSSSLHSDCDYVTLPLGDQGEEEVDQPPAPPPPYSARHEKTGLCGPPIAKPIPKPIAVVAPKPDSPPCSPPVPPAPIPAPPPAIRRRDPPPYSISSKPRPTSLISVSSSAHPAPSAAGSMSSLKSEEVTARFITTRPQISILKAHTSLIPDGAKPSYAAPHHCSSVASSNGSVCSHQLSQQSLHNSNYAGGSQASLHHHHVPSHHRHSGSAAIGIVPYGLHKSTASLHHQQSCVLLPVIKPRQFLAPPPPSLPRQPPPPPPPNHPHLASHLYEREMARKQLELYQQQLYSDVDYVIYPIQDPAVSQQEYLDAKQGSLLAAMAQAAPPPPHHPYLAMQVSPAIYRSTPYLPLTLSTHSRYASTQNLSDTYVQLPGPGYSPLYSPSMASLCSSYEPPPPPPLHPAALAAAAAAGAGSSSSSMFARSRSDDNILNSLDLLPKGKRLPPPPPPPYVNRRLKKPPMPAPSEKPPPIPSKPIPSRMSPIPPRKPPTLNPHHANSPLTKTSSGAQWAGERPRPDLGLGLGLNRGNNSILAQLQASMVAQSHAQAQAQALDIALLREKSKHLDLPLISALCNDRSLLKQTKVVINPKTGQEMPTSSAQPSGATTNGVANSSAGAGTLSKARKGSTVSHRHPQDKLPPLPVQQLAEANNYVIDPAVMMKQQQQQQQHNKTS.

One can recognise an FERM domain in the interval 26–399 (RFLALRLLGQ…DTHQWSMKLA (374 aa)). A disordered region spans residues 176–212 (GDAPPGTSNSKDDSGEETSASPSNGGRGLSATTTLPK). The span at 192 to 211 (ETSASPSNGGRGLSATTTLP) shows a compositional bias: polar residues. Tyr-227 and Tyr-423 each carry phosphotyrosine. Disordered stretches follow at residues 520–566 (VRPQ…IGSQ) and 611–656 (NSAL…SGVY). Residues 524–544 (DASSNGATIVTNSSVQRNSMG) show a composition bias toward polar residues. A compositionally biased stretch (low complexity) spans 545–559 (TTANDSSTATDSPSS). Tyr-679 is subject to Phosphotyrosine. A compositionally biased stretch (basic and acidic residues) spans 688–710 (EETHVQHSDSVDGKKKEDFRPRS). Disordered stretches follow at residues 688–732 (EETH…DNKH), 766–792 (YVTL…YSAR), 815–880 (APKP…SLKS), 939–963 (HNSN…HRHS), and 1000–1022 (LAPP…HPHL). Tyr-766 is subject to Phosphotyrosine. Pro residues predominate over residues 818 to 838 (PDSPPCSPPVPPAPIPAPPPA). Positions 842 to 847 (RDPPPY) match the RXPPXY motif motif. Residues 848 to 859 (SISSKPRPTSLI) show a composition bias toward polar residues. Positions 860–877 (SVSSSAHPAPSAAGSMSS) are enriched in low complexity. Positions 951–963 (LHHHHVPSHHRHS) are enriched in basic residues. The segment covering 1001 to 1019 (APPPPSLPRQPPPPPPPNH) has biased composition (pro residues). Residues 1008–1020 (PRQPPPPPPPNHP) carry the SH3-binding motif. Residue Tyr-1103 is modified to Phosphotyrosine. The SH3-binding signature appears at 1149 to 1157 (PPPPPPLHP). Ser-1181 carries the phosphoserine modification. Disordered regions lie at residues 1190-1267 (DLLP…WAGE) and 1345-1398 (TGQE…LPVQ). Composition is skewed to pro residues over residues 1214–1230 (PPMP…PSKP) and 1237–1246 (PIPPRKPPTL). Composition is skewed to polar residues over residues 1253–1262 (SPLTKTSSGA) and 1345–1370 (TGQE…SSAG). Residues 1376 to 1388 (KARKGSTVSHRHP) show a composition bias toward basic residues.

Forms a complex with Kibra and Mer. Interacts (via RXPPXY motif) with Kibra (via domain WW 1). Interacts with Mer and Hpo (via SARAH domain). Interacts with Schip1; the interaction results in recruitment of Schip1 to the apical cell membrane. Interacts with ack and yki. Post-translationally, phosphorylated by Ack at several tyrosines including Tyr-227, Tyr-423, Tyr-679, Tyr-766 and Tyr-1103.

The protein resides in the apical cell membrane. Activates the Hippo/SWH (Sav/Wts/Hpo) signaling pathway, a signaling pathway that plays a pivotal role in organ size control and tumor suppression by restricting proliferation and promoting apoptosis. The core of this pathway is composed of a kinase cascade wherein Hippo (Hpo), in complex with its regulatory protein Salvador (Sav), phosphorylates and activates Warts (Wts) in complex with its regulatory protein Mats, which in turn phosphorylates and inactivates the Yorkie (Yki) oncoprotein. Ex acts synergistically along with Mer and Kibra to regulate the Hippo signaling pathway. Involved in the control of cell proliferation in imaginal disks. May bind to certain proteins of signal transduction pathways by interaction with their SH3 domains. Required for apical localization of Schip1. The sequence is that of Protein expanded (ex) from Drosophila melanogaster (Fruit fly).